Reading from the N-terminus, the 406-residue chain is Haptoglobin (406 aa).

The first 18 residues, 1-18, serve as a signal peptide directing secretion; sequence MSALGAVIALLLWGQLFA. Sushi domains lie at 31–88 and 90–147; these read DGCP…ECEA. Disulfide bonds link Cys-52-Cys-86, Cys-111-Cys-145, Cys-149-Cys-266, Cys-309-Cys-340, and Cys-351-Cys-381. Residues 162 to 404 enclose the Peptidase S1 domain; sequence ILGGHLDAKG…IQDWVQKTIA (243 aa). Residue Asn-184 is glycosylated (N-linked (GlcNAc...) (complex) asparagine). N-linked (GlcNAc...) asparagine glycans are attached at residues Asn-207 and Asn-211. N-linked (GlcNAc...) (complex) asparagine glycosylation is present at Asn-241. An interaction with CD163 region spans residues 318–323; sequence VPEKKT.

This sequence belongs to the peptidase S1 family. Tetramer of two alpha and two beta chains; disulfide-linked. The hemoglobin/haptoglobin complex is composed of a haptoglobin dimer bound to two hemoglobin alpha-beta dimers. Interacts with CD163. Interacts with ERGIC3. As to expression, expressed by the liver and secreted in plasma.

The protein localises to the secreted. As a result of hemolysis, hemoglobin is found to accumulate in the kidney and is secreted in the urine. Haptoglobin captures, and combines with free plasma hemoglobin to allow hepatic recycling of heme iron and to prevent kidney damage. Haptoglobin also acts as an antioxidant, has antibacterial activity, and plays a role in modulating many aspects of the acute phase response. Hemoglobin/haptoglobin complexes are rapidly cleared by the macrophage CD163 scavenger receptor expressed on the surface of liver Kupfer cells through an endocytic lysosomal degradation pathway. Its function is as follows. The uncleaved form of allele alpha-2 (2-2), known as zonulin, plays a role in intestinal permeability, allowing intercellular tight junction disassembly, and controlling the equilibrium between tolerance and immunity to non-self antigens. The chain is Haptoglobin (HP) from Homo sapiens (Human).